Reading from the N-terminus, the 107-residue chain is MDQFQHISVVDAQEKLKQQDLNAVLVDIRDPQSFIRGHVENAFHLTNDTIVELMNEVDFEQPVLVMCYHGHSSQGAAQYLVNQGYEEVYSVDGGFEGWHKAGLPVEK.

The region spanning Q19–K107 is the Rhodanese domain. The active-site Cysteine persulfide intermediate is C67.

It belongs to the GlpE family.

It is found in the cytoplasm. The enzyme catalyses thiosulfate + hydrogen cyanide = thiocyanate + sulfite + 2 H(+). It catalyses the reaction thiosulfate + [thioredoxin]-dithiol = [thioredoxin]-disulfide + hydrogen sulfide + sulfite + 2 H(+). Functionally, transferase that catalyzes the transfer of sulfur from thiosulfate to thiophilic acceptors such as cyanide or dithiols. May function in a CysM-independent thiosulfate assimilation pathway by catalyzing the conversion of thiosulfate to sulfite, which can then be used for L-cysteine biosynthesis. This chain is Thiosulfate sulfurtransferase GlpE, found in Aliivibrio fischeri (strain MJ11) (Vibrio fischeri).